A 121-amino-acid chain; its full sequence is Griffithsin (121 aa).

The Jacalin-type lectin domain maps to 1–120; it reads SLTHRKFGGS…LDSLDIYYEQ (120 aa).

In terms of biological role, mixed specificity lectin with anti-HIV activity. Binds to HIV envelope glycoproteins, including exterior membrane glycoprotein gp120, and inhibits viral entry into cells. Binding to gp120 is dependent on gp120 being glycosylated, and is inhibited by mannose, glucose and N-acetylglucosamine. In Griffithsia sp. (strain Q66D336) (Red alga), this protein is Griffithsin.